The following is a 359-amino-acid chain: Holliday junction branch migration complex subunit RuvB (359 aa).

The tract at residues 1-22 (MAIVSSNAEPSKGAPRPKPSRV) is disordered. Residues 13 to 204 (GAPRPKPSRV…FGLIQRLEFY (192 aa)) are large ATPase domain (RuvB-L). Residues leucine 43, arginine 44, glycine 85, lysine 88, threonine 89, threonine 90, arginine 194, tyrosine 204, and arginine 241 each coordinate ATP. Residue threonine 89 participates in Mg(2+) binding. Residues 205–276 (GQEDLQAIVM…LVDEALTLHR (72 aa)) are small ATPAse domain (RuvB-S). The segment at 279 to 359 (GKGLDASDRR…GWPADEGDAA (81 aa)) is head domain (RuvB-H). 2 residues coordinate DNA: arginine 334 and arginine 339.

The protein belongs to the RuvB family. In terms of assembly, homohexamer. Forms an RuvA(8)-RuvB(12)-Holliday junction (HJ) complex. HJ DNA is sandwiched between 2 RuvA tetramers; dsDNA enters through RuvA and exits via RuvB. An RuvB hexamer assembles on each DNA strand where it exits the tetramer. Each RuvB hexamer is contacted by two RuvA subunits (via domain III) on 2 adjacent RuvB subunits; this complex drives branch migration. In the full resolvosome a probable DNA-RuvA(4)-RuvB(12)-RuvC(2) complex forms which resolves the HJ.

Its subcellular location is the cytoplasm. It carries out the reaction ATP + H2O = ADP + phosphate + H(+). Its function is as follows. The RuvA-RuvB-RuvC complex processes Holliday junction (HJ) DNA during genetic recombination and DNA repair, while the RuvA-RuvB complex plays an important role in the rescue of blocked DNA replication forks via replication fork reversal (RFR). RuvA specifically binds to HJ cruciform DNA, conferring on it an open structure. The RuvB hexamer acts as an ATP-dependent pump, pulling dsDNA into and through the RuvAB complex. RuvB forms 2 homohexamers on either side of HJ DNA bound by 1 or 2 RuvA tetramers; 4 subunits per hexamer contact DNA at a time. Coordinated motions by a converter formed by DNA-disengaged RuvB subunits stimulates ATP hydrolysis and nucleotide exchange. Immobilization of the converter enables RuvB to convert the ATP-contained energy into a lever motion, pulling 2 nucleotides of DNA out of the RuvA tetramer per ATP hydrolyzed, thus driving DNA branch migration. The RuvB motors rotate together with the DNA substrate, which together with the progressing nucleotide cycle form the mechanistic basis for DNA recombination by continuous HJ branch migration. Branch migration allows RuvC to scan DNA until it finds its consensus sequence, where it cleaves and resolves cruciform DNA. The protein is Holliday junction branch migration complex subunit RuvB of Synechococcus sp. (strain CC9311).